The chain runs to 1409 residues: DNA-directed RNA polymerase subunit beta' (1409 aa).

Zn(2+) contacts are provided by C70, C72, C85, and C88. Positions 458, 460, and 462 each coordinate Mg(2+). Zn(2+) is bound by residues C813, C887, C894, and C897.

It belongs to the RNA polymerase beta' chain family. As to quaternary structure, the RNAP catalytic core consists of 2 alpha, 1 beta, 1 beta' and 1 omega subunit. When a sigma factor is associated with the core the holoenzyme is formed, which can initiate transcription. Mg(2+) is required as a cofactor. Requires Zn(2+) as cofactor.

The enzyme catalyses RNA(n) + a ribonucleoside 5'-triphosphate = RNA(n+1) + diphosphate. Functionally, DNA-dependent RNA polymerase catalyzes the transcription of DNA into RNA using the four ribonucleoside triphosphates as substrates. The sequence is that of DNA-directed RNA polymerase subunit beta' from Acidovorax ebreus (strain TPSY) (Diaphorobacter sp. (strain TPSY)).